Here is a 152-residue protein sequence, read N- to C-terminus: Ribosome maturation factor RimP (152 aa).

It belongs to the RimP family.

The protein localises to the cytoplasm. In terms of biological role, required for maturation of 30S ribosomal subunits. In Francisella tularensis subsp. tularensis (strain FSC 198), this protein is Ribosome maturation factor RimP.